The primary structure comprises 122 residues: Large ribosomal subunit protein uL18 (122 aa).

Belongs to the universal ribosomal protein uL18 family. In terms of assembly, part of the 50S ribosomal subunit; part of the 5S rRNA/L5/L18/L25 subcomplex. Contacts the 5S and 23S rRNAs.

In terms of biological role, this is one of the proteins that bind and probably mediate the attachment of the 5S RNA into the large ribosomal subunit, where it forms part of the central protuberance. The polypeptide is Large ribosomal subunit protein uL18 (Prochlorococcus marinus (strain MIT 9301)).